A 418-amino-acid polypeptide reads, in one-letter code: Zinc metalloproteinase nas-8 (418 aa).

A signal peptide spans 1–28 (MMNRASLCRIAVLLCILHLSHLIDSTYA). A propeptide spanning residues 29–100 (QSYLTEKDFL…TSKLKSGVRR (72 aa)) is cleaved from the precursor. One can recognise a Peptidase M12A domain in the interval 101-296 (NGVTSVIKRW…LKINKLYNCP (196 aa)). Cystine bridges form between Cys-143/Cys-295, Cys-165/Cys-184, Cys-347/Cys-381, Cys-354/Cys-374, and Cys-361/Cys-378. His-192 provides a ligand contact to Zn(2+). The active site involves Glu-193. 2 residues coordinate Zn(2+): His-196 and His-202. One can recognise a ShKT domain in the interval 347–381 (CSDRTNLCWRWLDRCRSYFFEKIMKEFCALSCGYC).

It depends on Zn(2+) as a cofactor.

The protein localises to the secreted. The catalysed reaction is Hydrolysis of peptide bonds in substrates containing five or more amino acids, preferentially with Ala in P1', and Pro in P2'.. With respect to regulation, inhibited by ethylene glycol-bis(2-aminoethylether)-N,N,N,N-tetraacetic acid (EGTA), ethylenediaminetetraacetic acid (EDTA) and o-phenanthroline. Its function is as follows. Metalloprotease. This chain is Zinc metalloproteinase nas-8, found in Steinernema carpocapsae (Entomopathogenic nematode).